A 285-amino-acid chain; its full sequence is Probable endonuclease 4 (285 aa).

Positions 69, 109, 145, 179, 182, 216, 229, 231, and 261 each coordinate Zn(2+).

The protein belongs to the AP endonuclease 2 family. The cofactor is Zn(2+).

The enzyme catalyses Endonucleolytic cleavage to 5'-phosphooligonucleotide end-products.. Functionally, endonuclease IV plays a role in DNA repair. It cleaves phosphodiester bonds at apurinic or apyrimidinic (AP) sites, generating a 3'-hydroxyl group and a 5'-terminal sugar phosphate. The polypeptide is Probable endonuclease 4 (Cronobacter sakazakii (strain ATCC BAA-894) (Enterobacter sakazakii)).